Here is a 532-residue protein sequence, read N- to C-terminus: MGAGERAAGGGGTQDPGAGCGARALGALCLLLSVGSATACLLLGAQAAALHGRVAALEQERELLRRAGPSGALAAWAETHLERLLREKLDGVAKLRTVREAPSECICPPGPPGRRGKPGRRGDPGPPGQSGRDGYPGPLGLDGKPGLPGPKGEKGAPGDFGPRGAQGQDGAAGPPGPPGPPGARGPPGDTGKDGPRGAQGPEGPRGESGQDGEMGPMGPPGPKGEPGTPGKKGDDGIPSQPGLPGPPGPKGEPGDVGPQGETGVDGAPGLKGEPGHPGTDGAIGPRGPPGLKGEQGDTVVIDYDGRILDALKGPPGPQGAPGPPGIPGAKGELGLPGAPGIDGEKGPKGPKGDPGEPGPAGPKGETGEMGLSGLPGADGPKGEKGESASDHLQESLAQIIVEPGPPGPPGPPGPMGLQGIQGPKGLDGAKGEKGASGERGPHGLPGPVGPPGLIGLPGTKGEKGRPGEPGLDGFPGPRGEKGDRSERGEKGERGVPGRKGVKGQKGEPGPPGLDQPCPVGPDGLPVPGCWHK.

Residues 1-23 (MGAGERAAGGGGTQDPGAGCGAR) are Cytoplasmic-facing. Residues 24–45 (ALGALCLLLSVGSATACLLLGA) form a helical; Signal-anchor for type II membrane protein membrane-spanning segment. The Extracellular portion of the chain corresponds to 46-532 (QAAALHGRVA…GLPVPGCWHK (487 aa)). Residues 102–532 (PSECICPPGP…GLPVPGCWHK (431 aa)) form a disordered region. 4 consecutive Collagen-like domains span residues 108-163 (PPGP…FGPR), 173-232 (GPPG…PGKK), 242-297 (GLPG…EQGD), and 313-372 (GPPG…MGLS). Composition is skewed to low complexity over residues 129 to 145 (QSGR…DGKP) and 157 to 172 (PGDF…DGAA). 3 stretches are compositionally biased toward pro residues: residues 174-184 (PPGPPGPPGAR), 241-250 (PGLPGPPGPK), and 314-326 (PPGP…PPGI). 2 stretches are compositionally biased toward basic and acidic residues: residues 342-354 (DGEK…KGDP) and 380-393 (PKGE…DHLQ). The span at 403–414 (PGPPGPPGPPGP) shows a compositional bias: pro residues. Collagen-like domains follow at residues 404–452 (GPPG…GPPG) and 455–514 (GLPG…PGLD). 2 stretches are compositionally biased toward basic and acidic residues: residues 427-441 (DGAK…ERGP) and 478-495 (RGEK…ERGV).

In terms of assembly, homotrimer. In terms of processing, undergoes proteolytic cleavage by furin protease to yield a 60 kDa soluble form that forms a homotrimer and exhibits a low affinity interaction with heparin.

The protein localises to the cell membrane. In Rattus norvegicus (Rat), this protein is Collagen alpha-1(XXIII) chain (Col23a1).